The primary structure comprises 192 residues: RNA pyrophosphohydrolase (192 aa).

The region spanning G6–K149 is the Nudix hydrolase domain. The Nudix box motif lies at G38–G59.

It belongs to the Nudix hydrolase family. RppH subfamily. The cofactor is a divalent metal cation.

Its function is as follows. Accelerates the degradation of transcripts by removing pyrophosphate from the 5'-end of triphosphorylated RNA, leading to a more labile monophosphorylated state that can stimulate subsequent ribonuclease cleavage. The chain is RNA pyrophosphohydrolase from Histophilus somni (strain 129Pt) (Haemophilus somnus).